A 161-amino-acid chain; its full sequence is Phosphopantetheine adenylyltransferase (161 aa).

Residue threonine 10 coordinates substrate. ATP is bound by residues threonine 10 to phenylalanine 11 and histidine 18. 3 residues coordinate substrate: lysine 42, methionine 74, and arginine 88. ATP is bound by residues glycine 89–arginine 91, glutamate 99, and leucine 124–serine 130.

Belongs to the bacterial CoaD family. Homohexamer. The cofactor is Mg(2+).

The protein resides in the cytoplasm. It catalyses the reaction (R)-4'-phosphopantetheine + ATP + H(+) = 3'-dephospho-CoA + diphosphate. It participates in cofactor biosynthesis; coenzyme A biosynthesis; CoA from (R)-pantothenate: step 4/5. In terms of biological role, reversibly transfers an adenylyl group from ATP to 4'-phosphopantetheine, yielding dephospho-CoA (dPCoA) and pyrophosphate. The chain is Phosphopantetheine adenylyltransferase from Proteus mirabilis (strain HI4320).